The chain runs to 197 residues: Probable UbiX-like flavin prenyltransferase (197 aa).

Residues 9–11 (GAT), serine 36, 87–90 (SMKT), and arginine 122 contribute to the FMN site.

It belongs to the UbiX/PAD1 family. YclB subfamily. Homododecamer.

The catalysed reaction is dimethylallyl phosphate + FMNH2 = prenylated FMNH2 + phosphate. Its function is as follows. Flavin prenyltransferase that catalyzes the synthesis of the prenylated FMN cofactor (prenyl-FMN) for phenolic acid decarboxylase C. Involved in the decarboxylation and detoxification of phenolic derivatives under both aerobic and anaerobic conditions. This chain is Probable UbiX-like flavin prenyltransferase (ecdB), found in Escherichia coli O111:H-.